We begin with the raw amino-acid sequence, 115 residues long: U3-lycotoxin-Ls1k (115 aa).

Positions 1 to 20 (MKFVLLFGVLLVTLFSYSSA) are cleaved as a signal peptide. Residues 21–44 (EMFDDFDQADEDELLSLIEKEEAR) constitute a propeptide that is removed on maturation. 4 cysteine pairs are disulfide-bonded: Cys48–Cys63, Cys55–Cys72, Cys62–Cys87, and Cys74–Cys85.

Belongs to the neurotoxin 19 (CSTX) family. 01 subfamily. As to expression, expressed by the venom gland.

It localises to the secreted. The polypeptide is U3-lycotoxin-Ls1k (Lycosa singoriensis (Wolf spider)).